Here is a 187-residue protein sequence, read N- to C-terminus: MTVGISVEKGKQDTPPLELHYLGDKVLRQKAKRIAKVDDEIRTLAKEMLQTMYSSQGIGLAAPQVGVNKRLIVIDTDPENPANAPLVLINPEIKKFGQQLCPFEEGCLSIPGVHLDVIRPDEIEVSYRDEQGKPKRIKASGLLSRVIQHEIDHLDGVMFVDRVENEIALSSQLKQRGFALKSVQRIA.

Residues Cys107 and His149 each contribute to the Fe cation site. Glu150 is an active-site residue. Position 153 (His153) interacts with Fe cation.

Belongs to the polypeptide deformylase family. Fe(2+) is required as a cofactor.

The enzyme catalyses N-terminal N-formyl-L-methionyl-[peptide] + H2O = N-terminal L-methionyl-[peptide] + formate. Functionally, removes the formyl group from the N-terminal Met of newly synthesized proteins. Requires at least a dipeptide for an efficient rate of reaction. N-terminal L-methionine is a prerequisite for activity but the enzyme has broad specificity at other positions. The chain is Peptide deformylase from Picosynechococcus sp. (strain ATCC 27264 / PCC 7002 / PR-6) (Agmenellum quadruplicatum).